Reading from the N-terminus, the 429-residue chain is Divergent protein kinase domain 2A (429 aa).

The first 34 residues, 1–34, serve as a signal peptide directing secretion; the sequence is MLRLASLKFGRLFRYAKVLFAASLLVVMLLNTHS.

This sequence belongs to the DIPK family.

It is found in the cytoplasmic vesicle. Its subcellular location is the COPI-coated vesicle. The protein resides in the golgi apparatus. The protein localises to the secreted. Functionally, may play a role in cardiomyocyte proliferation through paracrine signaling and activation of the PPI3K-AKT-CDK7 signaling cascade. In Xenopus tropicalis (Western clawed frog), this protein is Divergent protein kinase domain 2A (dipk2a).